We begin with the raw amino-acid sequence, 141 residues long: Cystatin (141 aa).

An N-terminal signal peptide occupies residues 1-26 (MVHSQLPVAGPLRLLCALLLLPSATM). The region spanning 29 to 129 (GGLSPRSVTD…CRFQVWSRPW (101 aa)) is the Cystatin domain. Positions 73–77 (QVVSG) match the Secondary area of contact motif. Cystine bridges form between C91-C107 and C120-C140.

The protein belongs to the cystatin family. In terms of tissue distribution, expressed at a low level by the venom gland (at protein level).

It localises to the secreted. Functionally, inhibits various C1 cysteine proteases including cathepsin L, papain and cathepsin B. This protein has no toxic activity and its function in the venom is unknown. It may play a role as a housekeeping or regulatory protein. This is Cystatin from Pseudechis porphyriacus (Red-bellied black snake).